The chain runs to 560 residues: DNA ligase B (560 aa).

The active-site N6-AMP-lysine intermediate is the Lys-124.

The protein belongs to the NAD-dependent DNA ligase family. LigB subfamily.

The enzyme catalyses NAD(+) + (deoxyribonucleotide)n-3'-hydroxyl + 5'-phospho-(deoxyribonucleotide)m = (deoxyribonucleotide)n+m + AMP + beta-nicotinamide D-nucleotide.. Catalyzes the formation of phosphodiester linkages between 5'-phosphoryl and 3'-hydroxyl groups in double-stranded DNA using NAD as a coenzyme and as the energy source for the reaction. In Shigella sonnei (strain Ss046), this protein is DNA ligase B.